The chain runs to 173 residues: RNA polymerase sigma factor TcsR (173 aa).

The sigma-70 factor domain-4 stretch occupies residues 122 to 169; sequence IKDLTQNEKNIIRKIYLDRLRESEISRELNISRQAVNKTHLRALEKLK. The H-T-H motif DNA-binding region spans 143-162; the sequence is ESEISRELNISRQAVNKTHL.

The protein belongs to the sigma-70 factor family.

Its function is as follows. Sigma factors are initiation factors that promote the attachment of RNA polymerase to specific initiation sites and are then released. Transcriptional regulator specifically required to activate expression of the toxin gene locus, composed of tcsL, tcsH and tcdE/utxA. This chain is RNA polymerase sigma factor TcsR, found in Paraclostridium sordellii (Clostridium sordellii).